The following is a 438-amino-acid chain: Protein DAY-LENGTH-DEPENDENT DELAYED-GREENING 1, chloroplastic (438 aa).

The N-terminal 54 residues, 1–54, are a transit peptide targeting the chloroplast; sequence MSLMSSSMVLCHCLSFSSQNPDPESSSSSLLRYKPCDSISLWGKRRKKLWRFVP. The next 4 helical transmembrane spans lie at 216 to 236, 314 to 334, 359 to 379, and 398 to 418; these read FLAVLILIPWALDFLAHDYLL, AFANIWSDMVFGISLFVLLYA, AFLIILITDIFLGYHSESGWE, and ITIFICLVPVIMDACVKLWLF.

Belongs to the CemA family.

The protein localises to the plastid. The protein resides in the chloroplast envelope. Its subcellular location is the chloroplast membrane. It carries out the reaction K(+)(in) + H(+)(out) = K(+)(out) + H(+)(in). It catalyses the reaction Ca(2+)(in) + H(+)(out) = Ca(2+)(out) + H(+)(in). Promotes K(+)/H(+) antiport activity supporting K(+) efflux to control H(+) homeostasis in chloroplasts. Also able to ensure Ca(2+)/H(+) antiport activity in vitro. Essential for chloroplast pH regulation and optimization of non-photochemical quenching (NPQ), a regulatory mechanism that dissipates excess light energy; acts downstream of PSBS but independently from PGR5 and FLAP1. This Arabidopsis thaliana (Mouse-ear cress) protein is Protein DAY-LENGTH-DEPENDENT DELAYED-GREENING 1, chloroplastic.